The chain runs to 236 residues: Ubiquinone biosynthesis O-methyltransferase (236 aa).

Residues Arg39, Gly59, Asp80, and Met124 each contribute to the S-adenosyl-L-methionine site.

It belongs to the methyltransferase superfamily. UbiG/COQ3 family.

The catalysed reaction is a 3-demethylubiquinol + S-adenosyl-L-methionine = a ubiquinol + S-adenosyl-L-homocysteine + H(+). It catalyses the reaction a 3-(all-trans-polyprenyl)benzene-1,2-diol + S-adenosyl-L-methionine = a 2-methoxy-6-(all-trans-polyprenyl)phenol + S-adenosyl-L-homocysteine + H(+). It participates in cofactor biosynthesis; ubiquinone biosynthesis. O-methyltransferase that catalyzes the 2 O-methylation steps in the ubiquinone biosynthetic pathway. The chain is Ubiquinone biosynthesis O-methyltransferase from Shewanella putrefaciens (strain CN-32 / ATCC BAA-453).